The sequence spans 341 residues: Phosphate acyltransferase (341 aa).

Belongs to the PlsX family. In terms of assembly, homodimer. Probably interacts with PlsY.

It localises to the cytoplasm. The enzyme catalyses a fatty acyl-[ACP] + phosphate = an acyl phosphate + holo-[ACP]. It participates in lipid metabolism; phospholipid metabolism. In terms of biological role, catalyzes the reversible formation of acyl-phosphate (acyl-PO(4)) from acyl-[acyl-carrier-protein] (acyl-ACP). This enzyme utilizes acyl-ACP as fatty acyl donor, but not acyl-CoA. In Ehrlichia ruminantium (strain Gardel), this protein is Phosphate acyltransferase.